We begin with the raw amino-acid sequence, 1456 residues long: Macrophage mannose receptor 1 (1456 aa).

The signal sequence occupies residues 1 to 18; sequence MRLPLLLVFASVIPGAVL. At 19–1389 the chain is on the extracellular side; it reads LLDTRQFLIY…DPSKPSSNVA (1371 aa). The Ricin B-type lectin domain maps to 22–142; the sequence is TRQFLIYNED…SGLWSRWKIY (121 aa). Cystine bridges form between cysteine 35/cysteine 49 and cysteine 74/cysteine 91. Residue asparagine 104 is glycosylated (N-linked (GlcNAc...) asparagine). The Fibronectin type-II domain maps to 163–211; it reads ANGATCAFPFKFENKWYADCTSAGRSDGWLWCGTTTDYDTDKLFGYCPL. 4 disulfide bridges follow: cysteine 168–cysteine 194, cysteine 182–cysteine 209, cysteine 247–cysteine 340, and cysteine 316–cysteine 332. The C-type lectin 1 domain occupies 225 to 341; that stretch reads LTSVSYQINS…CVQKLGYICK (117 aa). Asparagine 344 carries N-linked (GlcNAc...) asparagine glycosylation. 4 consecutive C-type lectin domains span residues 369-487, 511-626, 655-778, and 807-923; these read YAGH…YICK, HHFY…FVCK, RTSL…WICQ, and YKDY…FICQ. 2 cysteine pairs are disulfide-bonded: cysteine 391–cysteine 486 and cysteine 463–cysteine 478. A glycan (N-linked (GlcNAc...) asparagine) is linked at asparagine 529. 7 disulfide bridges follow: cysteine 532-cysteine 625, cysteine 600-cysteine 617, cysteine 646-cysteine 659, cysteine 680-cysteine 777, cysteine 753-cysteine 769, cysteine 828-cysteine 922, and cysteine 899-cysteine 914. N-linked (GlcNAc...) asparagine glycosylation is found at asparagine 926 and asparagine 930. C-type lectin domains lie at 952-1080, 1102-1213, and 1241-1356; these read YSNK…YICQ, YGKS…FLCK, and FHGH…YICK. 6 cysteine pairs are disulfide-bonded: cysteine 977–cysteine 1079, cysteine 1052–cysteine 1071, cysteine 1123–cysteine 1212, cysteine 1190–cysteine 1204, cysteine 1263–cysteine 1355, and cysteine 1332–cysteine 1347. N-linked (GlcNAc...) asparagine glycosylation is present at asparagine 1160. A glycan (N-linked (GlcNAc...) asparagine) is linked at asparagine 1205. A helical membrane pass occupies residues 1390–1410; the sequence is GVVIIVILLILTGAGLAAYFF. The Cytoplasmic segment spans residues 1411–1456; it reads YKKRRVHLPQEGAFENTLYFNSQSSPGTSDMKDLVGNIEQNEHSVI.

As to quaternary structure, (Microbial infection) Interacts with Dengue virus. (Microbial infection) May act as a receptor for hepatitis B virus, enabling uptake of the virus in hepatic dendritic cells.

It is found in the endosome membrane. The protein resides in the cell membrane. In terms of biological role, mediates the endocytosis of glycoproteins by macrophages. Binds both sulfated and non-sulfated polysaccharide chains. (Microbial infection) Acts as a phagocytic receptor for bacteria, fungi and other pathogens. Its function is as follows. (Microbial infection) Acts as a receptor for Dengue virus envelope protein E. Functionally, (Microbial infection) Interacts with Hepatitis B virus envelope protein. The polypeptide is Macrophage mannose receptor 1 (MRC1) (Homo sapiens (Human)).